A 290-amino-acid polypeptide reads, in one-letter code: Nitrogenase iron protein 1 (290 aa).

10–17 (GKGGIGKS) contributes to the ATP binding site. C98 contributes to the [4Fe-4S] cluster binding site. R101 carries the post-translational modification ADP-ribosylarginine; by dinitrogenase reductase ADP-ribosyltransferase. C133 contacts [4Fe-4S] cluster.

The protein belongs to the NifH/BchL/ChlL family. Homodimer. The cofactor is [4Fe-4S] cluster. In terms of processing, the reversible ADP-ribosylation of Arg-101 inactivates the nitrogenase reductase and regulates nitrogenase activity.

The enzyme catalyses N2 + 8 reduced [2Fe-2S]-[ferredoxin] + 16 ATP + 16 H2O = H2 + 8 oxidized [2Fe-2S]-[ferredoxin] + 2 NH4(+) + 16 ADP + 16 phosphate + 6 H(+). Nitrogenase holoenzyme is subject to 'conformational protection' by FeSII; under oxidizing conditions FeSII binds to the holoenzyme and reversibly protects it from oxidation. In terms of biological role, the key enzymatic reactions in nitrogen fixation are catalyzed by the nitrogenase complex, which has 2 components: the iron protein (component 2) and a component 1 which is either a molybdenum-iron protein, a vanadium-iron, or an iron-iron protein. This chain is Nitrogenase iron protein 1 (nifH1), found in Azotobacter vinelandii.